We begin with the raw amino-acid sequence, 342 residues long: Probable endoglucanase (342 aa).

Residues Met-1–Ala-20 form the signal peptide. The active-site Proton donor is the Glu-57. Asp-114 (nucleophile) is an active-site residue.

The protein belongs to the glycosyl hydrolase 8 (cellulase D) family.

It is found in the secreted. The enzyme catalyses Endohydrolysis of (1-&gt;4)-beta-D-glucosidic linkages in cellulose, lichenin and cereal beta-D-glucans.. In terms of biological role, enzyme capable of hydrolyzing carboxy-methyl-cellulose (CMC). This chain is Probable endoglucanase (cmcAX), found in Novacetimonas hansenii (Komagataeibacter hansenii).